Reading from the N-terminus, the 221-residue chain is MKSPAPYIDHTLLKADATSAQIRQLCLEAAHWQFASVCIPPRFVSEAVACLADSQVAVGTVVGFPLGYDTAAVKRAATAQAVAEGVDEIDMVIPLGAALEGRLDMVREDVIGVLDAAAGRLVKVIIECCYLENARKVELVELLAEAGADYVKTSTGFAVSGAAEADIRLLHQAAGGRIKVKAAGGVRDWETCRIMLKAGAHRVGTSNGVQIIQQWQEAPEL.

Asp-90 acts as the Proton donor/acceptor in catalysis. The active-site Schiff-base intermediate with acetaldehyde is the Lys-152. Catalysis depends on Lys-181, which acts as the Proton donor/acceptor.

This sequence belongs to the DeoC/FbaB aldolase family. DeoC type 1 subfamily.

It localises to the cytoplasm. It catalyses the reaction 2-deoxy-D-ribose 5-phosphate = D-glyceraldehyde 3-phosphate + acetaldehyde. Its pathway is carbohydrate degradation; 2-deoxy-D-ribose 1-phosphate degradation; D-glyceraldehyde 3-phosphate and acetaldehyde from 2-deoxy-alpha-D-ribose 1-phosphate: step 2/2. Catalyzes a reversible aldol reaction between acetaldehyde and D-glyceraldehyde 3-phosphate to generate 2-deoxy-D-ribose 5-phosphate. The sequence is that of Deoxyribose-phosphate aldolase from Syntrophotalea carbinolica (strain DSM 2380 / NBRC 103641 / GraBd1) (Pelobacter carbinolicus).